The following is a 601-amino-acid chain: Mitochondrial tRNA methylthiotransferase CDK5RAP1 (601 aa).

The transit peptide at 1–33 (MHPLQCVLQVQRSLGWGPLASVSWLSLRMCRAH) directs the protein to the mitochondrion. An MTTase N-terminal domain is found at 100–220 (RKVYLETYGC…LPRLLAVAES (121 aa)). [4Fe-4S] cluster contacts are provided by cysteine 109, cysteine 145, cysteine 183, cysteine 258, cysteine 262, and cysteine 265. The 269-residue stretch at 244-512 (SASATSAFVS…ITIFREEATK (269 aa)) folds into the Radical SAM core domain. Residues 515 to 590 (QTSVGCTQLV…SQTLRGHVLC (76 aa)) form the TRAM domain.

Belongs to the methylthiotransferase family. MiaB subfamily. As to quaternary structure, interacts with CDK5R1 (p35 form). CDK5RAP1, CDK5RAP2 and CDK5RAP3 show competitive binding to CDK5R1. Forms a complex with CDK5R1 and CDK5. The cofactor is [4Fe-4S] cluster. In terms of tissue distribution, expressed in heart, brain, placenta, lung, liver, skeletal muscle, kidney and pancreas. Expressed in neurons of central nervous tissue. Mainly expressed in brain, placenta and testis. As to expression, high expression in placenta and lung.

It is found in the mitochondrion. It catalyses the reaction N(6)-dimethylallyladenosine(37) in tRNA + (sulfur carrier)-SH + AH2 + 2 S-adenosyl-L-methionine = 2-methylsulfanyl-N(6)-dimethylallyladenosine(37) in tRNA + (sulfur carrier)-H + 5'-deoxyadenosine + L-methionine + A + S-adenosyl-L-homocysteine + 2 H(+). Functionally, methylthiotransferase that catalyzes the conversion of N6-(dimethylallyl)adenosine (i(6)A) to 2-methylthio-N6-(dimethylallyl)adenosine (ms(2)i(6)A) at position 37 (adjacent to the 3'-end of the anticodon) of four mitochondrial DNA-encoded tRNAs (Ser(UCN), Phe, Tyr and Trp). Essential for efficient and highly accurate protein translation by the ribosome. Specifically inhibits CDK5 activation by CDK5R1. Essential for efficient mitochondrial protein synthesis and respiratory chain; shows pathological consequences in mitochondrial disease. In Homo sapiens (Human), this protein is Mitochondrial tRNA methylthiotransferase CDK5RAP1.